The following is a 336-amino-acid chain: MLYRLARAGFFQLDAEKAHDLAIQNFKRFTGTPIDLFYRQQLPNRPVECMGLTFRNPVGLAAGLDKNGECIEAFDAMGFGFVEVGTVTPRAQSGNDKPRLFRLVGAEGIINRMGFNNLGVDNLIENVKKAKYSCVLGINIGKNKDTPIEKGAEDYLICMEKVYEYAGYIAVNISSPNTPGLRTLQYGEALDELLVELKRKQAELEEKHGKYVPLALKIAPDLTDDEISQICQSLINNKIDGVIATNTTLDRTMVEGMKHAQEAGGLSGRPLQSRSTEVVRLLRKELQGNIPIIGVGGVDSYVAAKEKMLAGADLVQVYSGFIYHGPGLVRDIVKNL.

Residues 62–66 and Thr86 each bind FMN; that span reads AGLDK. Residue Lys66 participates in substrate binding. Substrate is bound at residue 111–115; sequence NRMGF. Residues Asn139 and Asn172 each contribute to the FMN site. Residue Asn172 participates in substrate binding. Ser175 (nucleophile) is an active-site residue. A substrate-binding site is contributed by Asn177. 2 residues coordinate FMN: Lys217 and Thr245. 246–247 contributes to the substrate binding site; that stretch reads NT. FMN is bound by residues Gly268, Gly297, and 318–319; that span reads YS.

The protein belongs to the dihydroorotate dehydrogenase family. Type 2 subfamily. As to quaternary structure, monomer. Requires FMN as cofactor.

The protein resides in the cell membrane. The catalysed reaction is (S)-dihydroorotate + a quinone = orotate + a quinol. Its pathway is pyrimidine metabolism; UMP biosynthesis via de novo pathway; orotate from (S)-dihydroorotate (quinone route): step 1/1. Its function is as follows. Catalyzes the conversion of dihydroorotate to orotate with quinone as electron acceptor. This Vibrio vulnificus (strain CMCP6) protein is Dihydroorotate dehydrogenase (quinone).